Reading from the N-terminus, the 331-residue chain is 5-formaminoimidazole-4-carboxamide-1-(beta)-D-ribofuranosyl 5'-monophosphate synthetase (331 aa).

H9 and S69 together coordinate 5-amino-1-(5-phospho-beta-D-ribosyl)imidazole-4-carboxamide. In terms of domain architecture, ATP-grasp spans 76–322; it reads VELVEKMKVP…IAMELKQGLE (247 aa). ATP contacts are provided by residues 120-179 and E201; that span reads PDDI…VPVY. N229 contributes to the 5-amino-1-(5-phospho-beta-D-ribosyl)imidazole-4-carboxamide binding site. Mg(2+)-binding residues include E267 and E280.

It belongs to the phosphohexose mutase family. Mg(2+) serves as cofactor. Mn(2+) is required as a cofactor.

The catalysed reaction is 5-amino-1-(5-phospho-beta-D-ribosyl)imidazole-4-carboxamide + formate + ATP = 5-formamido-1-(5-phospho-D-ribosyl)imidazole-4-carboxamide + ADP + phosphate. Its pathway is purine metabolism; IMP biosynthesis via de novo pathway; 5-formamido-1-(5-phospho-D-ribosyl)imidazole-4-carboxamide from 5-amino-1-(5-phospho-D-ribosyl)imidazole-4-carboxamide (formate route): step 1/1. Functionally, catalyzes the ATP- and formate-dependent formylation of 5-aminoimidazole-4-carboxamide-1-beta-d-ribofuranosyl 5'-monophosphate (AICAR) to 5-formaminoimidazole-4-carboxamide-1-beta-d-ribofuranosyl 5'-monophosphate (FAICAR) in the absence of folates. The polypeptide is 5-formaminoimidazole-4-carboxamide-1-(beta)-D-ribofuranosyl 5'-monophosphate synthetase (Thermococcus kodakarensis (strain ATCC BAA-918 / JCM 12380 / KOD1) (Pyrococcus kodakaraensis (strain KOD1))).